Reading from the N-terminus, the 212-residue chain is Adenylate kinase (212 aa).

G10–T15 contacts ATP. Residues S30–V59 form an NMP region. AMP-binding positions include T31, R36, E57–V59, G86–R89, and Q93. An LID region spans residues G127–D159. Residues R128 and T137–F138 each bind ATP. R156 and R167 together coordinate AMP. Residue Q195 coordinates ATP.

Monomer.

It is found in the cytoplasm. It carries out the reaction AMP + ATP = 2 ADP. The protein operates within purine metabolism; AMP biosynthesis via salvage pathway; AMP from ADP: step 1/1. Its function is as follows. Catalyzes the reversible transfer of the terminal phosphate group between ATP and AMP. Plays an important role in cellular energy homeostasis and in adenine nucleotide metabolism. The polypeptide is Adenylate kinase (Streptococcus pyogenes serotype M6 (strain ATCC BAA-946 / MGAS10394)).